A 246-amino-acid polypeptide reads, in one-letter code: Adenosylcobinamide-GDP ribazoletransferase (246 aa).

7 helical membrane passes run 30-50 (VNWYPAVGLVIGLLLWGVHQA), 51-71 (GLVLFSPWIAAILTLIAWVYV), 105-125 (VGAMGVLAAIMLLLIKAGAVA), 131-151 (GWGSFLIVAPVAARTHVLLSI), 167-189 (ISSGLSVSSIIVSYIIVFAAGWY), 193-210 (LQVMTAIFLSLLFALWFS), and 226-246 (GAVIESSEAVVLLVLVGSWWL).

The protein belongs to the CobS family. The cofactor is Mg(2+).

The protein resides in the cell membrane. It catalyses the reaction alpha-ribazole + adenosylcob(III)inamide-GDP = adenosylcob(III)alamin + GMP + H(+). It carries out the reaction alpha-ribazole 5'-phosphate + adenosylcob(III)inamide-GDP = adenosylcob(III)alamin 5'-phosphate + GMP + H(+). It functions in the pathway cofactor biosynthesis; adenosylcobalamin biosynthesis; adenosylcobalamin from cob(II)yrinate a,c-diamide: step 7/7. In terms of biological role, joins adenosylcobinamide-GDP and alpha-ribazole to generate adenosylcobalamin (Ado-cobalamin). Also synthesizes adenosylcobalamin 5'-phosphate from adenosylcobinamide-GDP and alpha-ribazole 5'-phosphate. The polypeptide is Adenosylcobinamide-GDP ribazoletransferase (Brevibacillus brevis (strain 47 / JCM 6285 / NBRC 100599)).